Consider the following 232-residue polypeptide: 2-C-methyl-D-erythritol 4-phosphate cytidylyltransferase (232 aa).

This sequence belongs to the IspD/TarI cytidylyltransferase family. IspD subfamily.

It carries out the reaction 2-C-methyl-D-erythritol 4-phosphate + CTP + H(+) = 4-CDP-2-C-methyl-D-erythritol + diphosphate. It functions in the pathway isoprenoid biosynthesis; isopentenyl diphosphate biosynthesis via DXP pathway; isopentenyl diphosphate from 1-deoxy-D-xylulose 5-phosphate: step 2/6. In terms of biological role, catalyzes the formation of 4-diphosphocytidyl-2-C-methyl-D-erythritol from CTP and 2-C-methyl-D-erythritol 4-phosphate (MEP). In Synechococcus sp. (strain ATCC 27144 / PCC 6301 / SAUG 1402/1) (Anacystis nidulans), this protein is 2-C-methyl-D-erythritol 4-phosphate cytidylyltransferase.